A 492-amino-acid chain; its full sequence is GDP-Man:Man(3)GlcNAc(2)-PP-Dol alpha-1,2-mannosyltransferase (492 aa).

The Lumenal segment spans residues 1-19; the sequence is MAADTGSWCVYAVLRFFYS. A helical membrane pass occupies residues 20–40; it reads LFFPGLMICGVLCVYLVIGLW. The Cytoplasmic portion of the chain corresponds to 41–233; the sequence is VIRWHLQRKK…SRNALLSKAK (193 aa). Positions 234–254 form an intramembrane region, helical; that stretch reads LIYYYLFAFVYGLVGSCSDIV. At 255–399 the chain is on the cytoplasmic side; sequence MVNSSWTLNH…IGLHTMWNEH (145 aa). The segment at residues 400–420 is an intramembrane region (helical); that stretch reads FGIGVVECMAAGTVILAHNSG. The Cytoplasmic segment spans residues 421–492; it reads GPKLDIVIPH…FLCSMEKLLT (72 aa).

It belongs to the glycosyltransferase group 1 family. Glycosyltransferase 4 subfamily.

Its subcellular location is the endoplasmic reticulum membrane. It carries out the reaction an alpha-D-Man-(1-&gt;3)-[alpha-D-Man-(1-&gt;6)]-beta-D-Man-(1-&gt;4)-beta-D-GlcNAc-(1-&gt;4)-alpha-D-GlcNAc-diphospho-di-trans,poly-cis-dolichol + 2 GDP-alpha-D-mannose = an alpha-D-Man-(1-&gt;2)-alpha-D-Man-(1-&gt;2)-alpha-D-Man-(1-&gt;3)-[alpha-D-Man-(1-&gt;6)]-beta-D-Man-(1-&gt;4)-beta-D-GlcNAc-(1-&gt;4)-alpha-D-GlcNAc-diphospho-di-trans,poly-cis-dolichol + 2 GDP + 2 H(+). It functions in the pathway protein modification; protein glycosylation. Functionally, GDP-Man:Man(3)GlcNAc(2)-PP-Dol alpha-1,2-mannosyltransferase that operates in the biosynthetic pathway of dolichol-linked oligosaccharides, the glycan precursors employed in protein asparagine (N)-glycosylation. The assembly of dolichol-linked oligosaccharides begins on the cytosolic side of the endoplasmic reticulum membrane and finishes in its lumen. The sequential addition of sugars to dolichol pyrophosphate produces dolichol-linked oligosaccharides containing fourteen sugars, including two GlcNAcs, nine mannoses and three glucoses. Once assembled, the oligosaccharide is transferred from the lipid to nascent proteins by oligosaccharyltransferases. Catalyzes, on the cytoplasmic face of the endoplasmic reticulum, the addition of the fourth and fifth mannose residues to the dolichol-linked oligosaccharide chain, to produce Man(5)GlcNAc(2)-PP-dolichol core oligosaccharide. Man(5)GlcNAc(2)-PP-dolichol is a substrate for ALG3, the following enzyme in the biosynthetic pathway. This is GDP-Man:Man(3)GlcNAc(2)-PP-Dol alpha-1,2-mannosyltransferase from Mus musculus (Mouse).